We begin with the raw amino-acid sequence, 311 residues long: Probable manganese-dependent inorganic pyrophosphatase (311 aa).

Residues His9, Asp13, Asp15, Asp75, His97, and Asp149 each coordinate Mn(2+).

This sequence belongs to the PPase class C family. It depends on Mn(2+) as a cofactor.

It localises to the cytoplasm. It catalyses the reaction diphosphate + H2O = 2 phosphate + H(+). This is Probable manganese-dependent inorganic pyrophosphatase from Lactobacillus acidophilus (strain ATCC 700396 / NCK56 / N2 / NCFM).